Reading from the N-terminus, the 447-residue chain is Tubulin beta chain (447 aa).

Positions 11, 69, 138, 142, 143, 144, 204, and 226 each coordinate GTP. Glutamate 69 contacts Mg(2+). The disordered stretch occupies residues 424–447 (QYQEASVSEGEEEYDEEAPLEGEE). Positions 432–447 (EGEEEYDEEAPLEGEE) are enriched in acidic residues.

This sequence belongs to the tubulin family. In terms of assembly, dimer of alpha and beta chains. A typical microtubule is a hollow water-filled tube with an outer diameter of 25 nm and an inner diameter of 15 nM. Alpha-beta heterodimers associate head-to-tail to form protofilaments running lengthwise along the microtubule wall with the beta-tubulin subunit facing the microtubule plus end conferring a structural polarity. Microtubules usually have 13 protofilaments but different protofilament numbers can be found in some organisms and specialized cells. The cofactor is Mg(2+).

The protein resides in the cytoplasm. Its subcellular location is the cytoskeleton. Functionally, tubulin is the major constituent of microtubules, a cylinder consisting of laterally associated linear protofilaments composed of alpha- and beta-tubulin heterodimers. Microtubules grow by the addition of GTP-tubulin dimers to the microtubule end, where a stabilizing cap forms. Below the cap, tubulin dimers are in GDP-bound state, owing to GTPase activity of alpha-tubulin. The polypeptide is Tubulin beta chain (TUB1) (Dothistroma septosporum (Red band needle blight fungus)).